Reading from the N-terminus, the 287-residue chain is Aromatic amino acid exporter YddG (287 aa).

Topologically, residues 1-5 (MSRSS) are cytoplasmic. Residues 6 to 24 (ATLIGFTAILLWSTLALAT) form a helical membrane-spanning segment. The region spanning 7 to 136 (TLIGFTAILL…MGLAGTVVLL (130 aa)) is the EamA 1 domain. The Periplasmic segment spans residues 25–31 (SSTGAVP). Residues 32 to 54 (PFLLTALTFTIGGAVGIAAGLAR) form a helical membrane-spanning segment. Topologically, residues 55–65 (GVGLSVLRQPW) are cytoplasmic. Residues 66 to 86 (PVWVHGIGGLFGYHFFYFSAL) traverse the membrane as a helical segment. The Periplasmic portion of the chain corresponds to 87-90 (KLAP). A helical membrane pass occupies residues 91–111 (PAEAGLVAYLWPLLIVLFSAF). At 112-118 (LPGERLR) the chain is on the cytoplasmic side. A helical membrane pass occupies residues 119 to 139 (PAHVAGALMGLAGTVVLLGAR). The Periplasmic portion of the chain corresponds to 140-149 (AGGFGFAPEY). A helical membrane pass occupies residues 150–170 (VPGYLAAAACAVIWSVYSVAS). One can recognise an EamA 2 domain in the interval 151–281 (PGYLAAAACA…ALIVGGAAVA (131 aa)). At 171–176 (RRFARV) the chain is on the cytoplasmic side. Residues 177 to 198 (PTEVVAGFCLATAALSALCHIL) traverse the membrane as a helical segment. Residues 199 to 208 (FEPSVWPVGS) lie on the Periplasmic side of the membrane. The chain crosses the membrane as a helical span at residues 209-233 (EWLAVVALGIGPVGIAFYTWDIGMK). The Cytoplasmic portion of the chain corresponds to 234–236 (RGD). Residues 237–258 (VRLLGVLSYAAPVLSTLLLVVA) traverse the membrane as a helical segment. The Periplasmic segment spans residues 259–264 (GFAAPS). Residues 265 to 284 (GALAIACALIVGGAAVATLL) traverse the membrane as a helical segment. At 285–287 (ARR) the chain is on the cytoplasmic side.

This sequence belongs to the drug/metabolite transporter (DMT) superfamily. Aromatic amino acid/paraquat exporter (ArAA/P-E) (TC 2.A.7.17) family.

It is found in the cell inner membrane. It carries out the reaction L-threonine(in) = L-threonine(out). The catalysed reaction is L-methionine(in) = L-methionine(out). It catalyses the reaction L-lysine(in) = L-lysine(out). The enzyme catalyses L-glutamate(out) = L-glutamate(in). Functionally, amino acid transporter with broad substrate specificity. Can transport various amino acids, including L-threonine, L-methionine, L-lysine and L-glutamate. This is Aromatic amino acid exporter YddG from Ancylobacter novellus (strain ATCC 8093 / DSM 506 / JCM 20403 / CCM 1077 / IAM 12100 / NBRC 12443 / NCIMB 10456) (Starkeya novella).